We begin with the raw amino-acid sequence, 278 residues long: MTRVIVISNLRLAQAFVDYMATHHVALEIRPDAQGVEIWLADDEQLSAVQHELEQFLLDPLNPRYQAASWQAGNVNSNLPYQRFSYLQTLRSQAGPLTLSVMVLCIAIYILMLITGDMAVMSWLAWPYNSSQYLQIWRWVSHAFLHFSLLHILFNLMWWWYLGGQMEKRLGTSKLLVLTIVSAVFSGWGQSLFSGANFGGLSGVVYALMGYVWLTGERAPEHGISLPRGLMAFSVLWLIAGYFDILGLSIANAAHVSGLIIGLLMAFWDTRNSARTVQ.

6 consecutive transmembrane segments (helical) span residues 94–114 (AGPL…LMLI), 143–163 (AFLH…WYLG), 175–195 (LLVL…LFSG), 196–216 (ANFG…WLTG), 224–241 (ISLP…LIAG), and 245–267 (ILGL…LMAF). Serine 202 serves as the catalytic Nucleophile. Histidine 255 is an active-site residue.

It belongs to the peptidase S54 family.

The protein localises to the cell inner membrane. The enzyme catalyses Cleaves type-1 transmembrane domains using a catalytic dyad composed of serine and histidine that are contributed by different transmembrane domains.. Rhomboid-type serine protease that catalyzes intramembrane proteolysis. This is Rhomboid protease GlpG from Yersinia pseudotuberculosis serotype I (strain IP32953).